The chain runs to 457 residues: Heme sensor protein HssS (457 aa).

The next 2 membrane-spanning stretches (helical) occupy residues 9–29 (IAIY…VLTN) and 164–184 (TFLA…VIAS). The 53-residue stretch at 186-238 (YSIIRPVKKLKLATERLIDGDFETPIKQTRKDEIGTLQYHFNKMRESLGQVDQ) folds into the HAMP domain. In terms of domain architecture, Histidine kinase spans 246 to 456 (NVSHEIKTPL…TFTITLPNNS (211 aa)). At His249 the chain carries Phosphohistidine; by autocatalysis.

In terms of processing, autophosphorylated.

Its subcellular location is the cell membrane. It catalyses the reaction ATP + protein L-histidine = ADP + protein N-phospho-L-histidine.. Member of the two-component regulatory system HssS/HssR involved in intracellular heme homeostasis and tempering of staphylococcal virulence. HssS functions as a heme sensor histidine kinase which is autophosphorylated at a histidine residue and transfers its phosphate group to an aspartate residue of HssR. HssR/HssS activates the expression of hrtAB, an efflux pump, in response to extracellular heme, hemin, hemoglobin or blood. The chain is Heme sensor protein HssS (hssS) from Staphylococcus aureus (strain MSSA476).